The chain runs to 533 residues: Bifunctional aspartate aminotransferase and L-aspartate beta-decarboxylase (533 aa).

Positions 115 and 256 each coordinate L-aspartate. Residue lysine 315 is modified to N6-(pyridoxal phosphate)lysine. Residue arginine 497 participates in L-aspartate binding.

It belongs to the class-I pyridoxal-phosphate-dependent aminotransferase family. Homododecamer. It depends on pyridoxal 5'-phosphate as a cofactor.

The catalysed reaction is L-aspartate + H(+) = L-alanine + CO2. It carries out the reaction L-aspartate + 2-oxoglutarate = oxaloacetate + L-glutamate. Its function is as follows. Bifunctional enzyme that has both L-aspartate decarboxylase and transaminase activity. This chain is Bifunctional aspartate aminotransferase and L-aspartate beta-decarboxylase, found in Comamonas testosteroni (Pseudomonas testosteroni).